The primary structure comprises 315 residues: tRNA U34 carboxymethyltransferase (315 aa).

Carboxy-S-adenosyl-L-methionine contacts are provided by residues K79, W93, K98, G117, 142–144, 169–170, Y193, and R307; these read DPS and VE.

The protein belongs to the class I-like SAM-binding methyltransferase superfamily. CmoB family. Homotetramer.

It carries out the reaction carboxy-S-adenosyl-L-methionine + 5-hydroxyuridine(34) in tRNA = 5-carboxymethoxyuridine(34) in tRNA + S-adenosyl-L-homocysteine + H(+). Functionally, catalyzes carboxymethyl transfer from carboxy-S-adenosyl-L-methionine (Cx-SAM) to 5-hydroxyuridine (ho5U) to form 5-carboxymethoxyuridine (cmo5U) at position 34 in tRNAs. The protein is tRNA U34 carboxymethyltransferase of Helicobacter hepaticus (strain ATCC 51449 / 3B1).